The sequence spans 283 residues: Thymidylate synthase (283 aa).

DUMP is bound at residue Arg22. Cys160 acts as the Nucleophile in catalysis. DUMP-binding positions include 180–183 (RSCD), Asn191, and 221–223 (HIY). Residue Asp183 participates in (6R)-5,10-methylene-5,6,7,8-tetrahydrofolate binding. Ala282 is a binding site for (6R)-5,10-methylene-5,6,7,8-tetrahydrofolate.

This sequence belongs to the thymidylate synthase family. Bacterial-type ThyA subfamily. As to quaternary structure, homodimer.

The protein resides in the cytoplasm. It carries out the reaction dUMP + (6R)-5,10-methylene-5,6,7,8-tetrahydrofolate = 7,8-dihydrofolate + dTMP. It functions in the pathway pyrimidine metabolism; dTTP biosynthesis. In terms of biological role, catalyzes the reductive methylation of 2'-deoxyuridine-5'-monophosphate (dUMP) to 2'-deoxythymidine-5'-monophosphate (dTMP) while utilizing 5,10-methylenetetrahydrofolate (mTHF) as the methyl donor and reductant in the reaction, yielding dihydrofolate (DHF) as a by-product. This enzymatic reaction provides an intracellular de novo source of dTMP, an essential precursor for DNA biosynthesis. This Colwellia psychrerythraea (strain 34H / ATCC BAA-681) (Vibrio psychroerythus) protein is Thymidylate synthase.